A 248-amino-acid polypeptide reads, in one-letter code: PF03932 family protein CutC (248 aa).

This sequence belongs to the CutC family. As to quaternary structure, homodimer.

The protein localises to the cytoplasm. This is PF03932 family protein CutC from Salmonella paratyphi A (strain AKU_12601).